The sequence spans 149 residues: Alpha-crystallin A chain (149 aa).

Residues 41-149 enclose the sHSP domain; sequence LFRTVLESGI…DTSYSERPIP (109 aa). Positions 89, 91, and 96 each coordinate Zn(2+).

It belongs to the small heat shock protein (HSP20) family. In terms of assembly, heteropolymer composed of three CRYAA and one CRYAB subunits. Inter-subunit bridging via zinc ions enhances stability, which is crucial as there is no protein turn over in the lens. Zinc coordination is achieved at least by His-89, Glu-91 and His-96. His-83 and Glu-85 come from the same molecule within the oligomer, while His-90 residue is provided by another molecule. Can also form homodimers and homotetramers (dimers of dimers) which serve as the building blocks of homooligomers.

Its subcellular location is the cytoplasm. The protein resides in the nucleus. Its function is as follows. Contributes to the transparency and refractive index of the lens. May act as a chaperone, preventing aggregation of various proteins under a wide range of stress conditions. This chain is Alpha-crystallin A chain (CRYAA), found in Trachemys scripta elegans (Red-eared slider turtle).